The chain runs to 216 residues: Phosphoserine phosphatase (216 aa).

Asp10 functions as the Nucleophile in the catalytic mechanism. Positions 10 and 12 each coordinate Mg(2+). Asp12 serves as the catalytic Proton donor. Residues Glu19, Arg55, Ser98 to Gly99, and Lys143 each bind substrate. Position 166 (Asp166) interacts with Mg(2+). Residue Asn169 coordinates substrate.

This sequence belongs to the HAD-like hydrolase superfamily. SerB family. Mg(2+) serves as cofactor.

The catalysed reaction is O-phospho-L-serine + H2O = L-serine + phosphate. The enzyme catalyses O-phospho-D-serine + H2O = D-serine + phosphate. It participates in amino-acid biosynthesis; L-serine biosynthesis; L-serine from 3-phospho-D-glycerate: step 3/3. In Lactococcus lactis subsp. lactis (strain IL1403) (Streptococcus lactis), this protein is Phosphoserine phosphatase.